Consider the following 189-residue polypeptide: Elongation factor P (189 aa).

At K34 the chain carries N6-(3,6-diaminohexanoyl)-5-hydroxylysine.

The protein belongs to the elongation factor P family. In terms of processing, may be beta-lysylated on the epsilon-amino group of Lys-34 by the combined action of EpmA and EpmB, and then hydroxylated on the C5 position of the same residue by EpmC (if this protein is present). Lysylation is critical for the stimulatory effect of EF-P on peptide-bond formation. The lysylation moiety may extend toward the peptidyltransferase center and stabilize the terminal 3-CCA end of the tRNA. Hydroxylation of the C5 position on Lys-34 may allow additional potential stabilizing hydrogen-bond interactions with the P-tRNA.

The protein resides in the cytoplasm. The protein operates within protein biosynthesis; polypeptide chain elongation. In terms of biological role, involved in peptide bond synthesis. Alleviates ribosome stalling that occurs when 3 or more consecutive Pro residues or the sequence PPG is present in a protein, possibly by augmenting the peptidyl transferase activity of the ribosome. Modification of Lys-34 is required for alleviation. This Idiomarina loihiensis (strain ATCC BAA-735 / DSM 15497 / L2-TR) protein is Elongation factor P.